Here is an 815-residue protein sequence, read N- to C-terminus: Phenylalanine--tRNA ligase beta subunit (815 aa).

The tRNA-binding domain maps to 39 to 148; the sequence is ATELQKFEVA…EYAVVGDNFT (110 aa). One can recognise a B5 domain in the interval 420–495; it reads LQKIPLDFSV…RIYGYDKIES (76 aa). The Mg(2+) site is built by Asp-473, Asp-479, Glu-482, and Glu-483. Residues 721-814 enclose the FDX-ACB domain; that stretch reads SDFQANFRDY…ISQKFQGTLR (94 aa).

The protein belongs to the phenylalanyl-tRNA synthetase beta subunit family. Type 1 subfamily. Tetramer of two alpha and two beta subunits. Mg(2+) serves as cofactor.

The protein localises to the cytoplasm. It catalyses the reaction tRNA(Phe) + L-phenylalanine + ATP = L-phenylalanyl-tRNA(Phe) + AMP + diphosphate + H(+). The protein is Phenylalanine--tRNA ligase beta subunit of Rickettsia typhi (strain ATCC VR-144 / Wilmington).